Reading from the N-terminus, the 216-residue chain is MSGRLLVLEGIDGCGKTTQLRHLANWLPRSGLMPEGARLHLTREPGGTALGMALRKLVLHPPGDASPEPLAELLLYAADRAQHVAQLIRPALEQGHWVLSDRFSGSTLAYQGYGRELDLDLIQQLEQIATAGLVPDLTFWLELSVEESLVRRDARSNDRIEAEGVDFLTRVATGFAVLARERSWVPLQADQQVESVSSALESQLKHHFGPLQESMR.

10-17 (GIDGCGKT) is a binding site for ATP.

This sequence belongs to the thymidylate kinase family.

It catalyses the reaction dTMP + ATP = dTDP + ADP. In terms of biological role, phosphorylation of dTMP to form dTDP in both de novo and salvage pathways of dTTP synthesis. The sequence is that of Thymidylate kinase from Prochlorococcus marinus (strain MIT 9303).